Reading from the N-terminus, the 161-residue chain is Allophycocyanin alpha chain (161 aa).

N71 is subject to N4-methylasparagine. C81 contacts (2R,3E)-phycocyanobilin.

It belongs to the phycobiliprotein family. Heterodimer of an alpha and a beta chain. Contains one covalently linked phycocyanobilin chromophore.

It is found in the cellular thylakoid membrane. Its function is as follows. Light-harvesting photosynthetic bile pigment-protein from the phycobiliprotein complex. Allophycocyanin has a maximum absorption at approximately 650 nanometers. The protein is Allophycocyanin alpha chain (apcA) of Synechocystis sp. (strain PCC 6714) (Aphanocapsa sp. (strain PCC 6714)).